A 151-amino-acid polypeptide reads, in one-letter code: UPF0208 membrane protein YfbV (151 aa).

Helical transmembrane passes span 46-65 and 69-91; these read YAIRFMPPVAVFTLCWQIAL and LGPAVATALFALSLPMQGLWWLG.

The protein belongs to the UPF0208 family.

Its subcellular location is the cell inner membrane. In Salmonella choleraesuis (strain SC-B67), this protein is UPF0208 membrane protein YfbV.